We begin with the raw amino-acid sequence, 1040 residues long: Multidrug resistance protein MdtB (1040 aa).

12 consecutive transmembrane segments (helical) span residues 25–45, 347–367, 369–389, 396–416, 440–460, 472–492, 537–557, 863–883, 888–908, 910–930, 968–988, and 998–1018; these read LLMA…PVAA, LMLA…NIPA, IIPG…MVFL, LTLM…IVVI, IGFT…PLLF, FAVT…TLTP, WLTL…WIVI, LGST…VLGV, FIHP…ALLA, IIAG…LIGI, ILMT…STGV, and IAMV…TPVI.

This sequence belongs to the resistance-nodulation-cell division (RND) (TC 2.A.6) family. MdtB subfamily. As to quaternary structure, part of a tripartite efflux system composed of MdtA, MdtB and MdtC. MdtB forms a heteromultimer with MdtC.

The protein localises to the cell inner membrane. This chain is Multidrug resistance protein MdtB, found in Salmonella agona (strain SL483).